Here is a 447-residue protein sequence, read N- to C-terminus: Probable alpha-galactosidase B (447 aa).

A signal peptide spans 1 to 22 (MTTFLSLTTAAAVLTLARGSNA). Disulfide bonds link Cys-45-Cys-77 and Cys-127-Cys-157. Asp-155 serves as the catalytic Nucleophile. Asn-162 and Asn-180 each carry an N-linked (GlcNAc...) asparagine glycan. 225–229 (NWGQA) is a binding site for substrate. The N-linked (GlcNAc...) asparagine glycan is linked to Asn-236. Asp-247 serves as the catalytic Proton donor. Residue Asn-286 is glycosylated (N-linked (GlcNAc...) asparagine).

This sequence belongs to the glycosyl hydrolase 27 family.

The protein resides in the secreted. The enzyme catalyses Hydrolysis of terminal, non-reducing alpha-D-galactose residues in alpha-D-galactosides, including galactose oligosaccharides, galactomannans and galactolipids.. Its function is as follows. Hydrolyzes a variety of simple alpha-D-galactoside as well as more complex molecules such as oligosaccharides and polysaccharides. The polypeptide is Probable alpha-galactosidase B (aglB) (Neosartorya fischeri (strain ATCC 1020 / DSM 3700 / CBS 544.65 / FGSC A1164 / JCM 1740 / NRRL 181 / WB 181) (Aspergillus fischerianus)).